We begin with the raw amino-acid sequence, 482 residues long: Iroquois-class homeodomain protein irx-5 (482 aa).

Residues 109–171 (DPAYRKNATR…NARRRLKKEN (63 aa)) constitute a DNA-binding region (homeobox). Disordered stretches follow at residues 173–307 (MTWT…HQSH) and 462–482 (QSQADLNKDTPYEMKKGMSSI). Positions 182 to 198 (EDEEDDENIDLEKNEED) are enriched in acidic residues. Residues 199–256 (DPRKLEEKGDQDGDAGDQKRSPSAVDFDRLEGEVRQGKELDQTRSDSEQNEVEERNDL) show a composition bias toward basic and acidic residues. Residues 264–273 (PTSPLCPPDQ) are compositionally biased toward pro residues. Basic residues predominate over residues 284–305 (HRHTVHNHHHQSIQQLHHHSHQ). Positions 467-482 (LNKDTPYEMKKGMSSI) are enriched in basic and acidic residues.

This sequence belongs to the TALE/IRO homeobox family. Expressed in the neural plate in overlapping patterns with other irx members, which all share an anterior border of expression. Broadly expressed in the tailbud rhombencephalon (hindbrain). Outside the nervous system and at tailbud stages, expressed in the developing otic vesicle and branchial arches.

It localises to the nucleus. Acts partially redundantly with other irx members in neural patterning. Required for formation of the posterior forebrain, midbrain, hindbrain, and to a lesser extent, spinal cord. Patterns the neuroectoderm in both the anterior/posterior and dorsal/ventral axes. Does not appear to play a role in pronephros kidney development. Involved in craniofacial and gonadal development. Modulates the migration of progenitor cell populations in branchial arches and gonads by repressing CXCL12. This is Iroquois-class homeodomain protein irx-5 from Xenopus tropicalis (Western clawed frog).